The sequence spans 429 residues: Zinc finger protein 385C (429 aa).

The Matrin-type 1 zinc-finger motif lies at 77 to 107 (ISCNICHLRFNSANQAEAHYKGHRHARKLKA). 3 disordered regions span residues 109-224 (EAAK…GRGE), 258-295 (GHQG…GPSP), and 311-340 (QLKQ…NKLQ). A compositionally biased stretch (low complexity) spans 125–146 (TVVSSASPPASGSPGTPQSKGP). Residues 147 to 162 (ASPPLGPSLQLPPTPD) are compositionally biased toward pro residues. The segment covering 181-193 (CDAAASSSSSSCP) has biased composition (low complexity). Residues 225 to 259 (KGRLYCPTCKVTVNSASQLQAHNTGAKHRWMVEGH) form a Matrin-type 2 zinc finger. Residues 262-284 (APRRGRGRPVSRGGTGHKTKRVI) are compositionally biased toward basic residues. The segment at 297-327 (FHCALCQLHVNSETQLKQHMSSRRHKDRLAG) adopts a Matrin-type 3 zinc-finger fold.

The protein localises to the nucleus. This is Zinc finger protein 385C from Mus musculus (Mouse).